We begin with the raw amino-acid sequence, 212 residues long: Imidazole glycerol phosphate synthase subunit HisH (212 aa).

Residues 3-212 enclose the Glutamine amidotransferase type-1 domain; that stretch reads TVAVIDYGMG…QNFAAWDGRW (210 aa). The active-site Nucleophile is Cys-81. Residues His-190 and Glu-192 contribute to the active site.

As to quaternary structure, heterodimer of HisH and HisF.

It localises to the cytoplasm. The catalysed reaction is 5-[(5-phospho-1-deoxy-D-ribulos-1-ylimino)methylamino]-1-(5-phospho-beta-D-ribosyl)imidazole-4-carboxamide + L-glutamine = D-erythro-1-(imidazol-4-yl)glycerol 3-phosphate + 5-amino-1-(5-phospho-beta-D-ribosyl)imidazole-4-carboxamide + L-glutamate + H(+). It carries out the reaction L-glutamine + H2O = L-glutamate + NH4(+). It participates in amino-acid biosynthesis; L-histidine biosynthesis; L-histidine from 5-phospho-alpha-D-ribose 1-diphosphate: step 5/9. IGPS catalyzes the conversion of PRFAR and glutamine to IGP, AICAR and glutamate. The HisH subunit catalyzes the hydrolysis of glutamine to glutamate and ammonia as part of the synthesis of IGP and AICAR. The resulting ammonia molecule is channeled to the active site of HisF. This is Imidazole glycerol phosphate synthase subunit HisH from Pseudomonas savastanoi pv. phaseolicola (strain 1448A / Race 6) (Pseudomonas syringae pv. phaseolicola (strain 1448A / Race 6)).